Here is a 150-residue protein sequence, read N- to C-terminus: Single-stranded DNA-binding protein 1 (150 aa).

The SSB domain occupies 1–104 (MINNVVLVGR…VVADTFQMLE (104 aa)). Over residues 103-120 (LESNKTQGQQTSKPQAQN) the composition is skewed to polar residues. Residues 103 to 150 (LESNKTQGQQTSKPQAQNKKPQAPDPFKAPAADPFAGGTEISDDDLPF) are disordered. The segment covering 121 to 138 (KKPQAPDPFKAPAADPFA) has biased composition (low complexity). Residues 145–150 (DDDLPF) carry the Important for interaction with partner proteins motif.

As to quaternary structure, homotetramer.

Functionally, plays an important role in DNA replication, recombination and repair. Binds to ssDNA and to an array of partner proteins to recruit them to their sites of action during DNA metabolism. The protein is Single-stranded DNA-binding protein 1 (ssb1) of Lactococcus lactis subsp. lactis (strain IL1403) (Streptococcus lactis).